Consider the following 149-residue polypeptide: Oligosaccharyltransferase complex subunit ostc (149 aa).

The Cytoplasmic segment spans residues 1 to 32; the sequence is METLFSLPFTVLECPNVKLKKPSWLHMPSAMT. Residues 33-53 form a helical membrane-spanning segment; sequence VYAVVIVSYFLITGGIIYDVI. The Extracellular segment spans residues 54–83; sequence VEPPSVGSMTDEHGHQRPVAFLAYRVNGQY. A helical membrane pass occupies residues 84–104; sequence IMEGLASSFLFTMGGLGFIIL. At 105 to 117 the chain is on the cytoplasmic side; the sequence is DRSNAPNIPKLNR. A helical transmembrane segment spans residues 118–138; the sequence is FLLLFIGFVSVLLSFFMARVF. Residues 139-149 lie on the Extracellular side of the membrane; that stretch reads MRMKLPGYLMG.

This sequence belongs to the OSTC family. As to quaternary structure, specific component of the STT3A-containing form of the oligosaccharyltransferase (OST) complex.

Its subcellular location is the membrane. Its pathway is protein modification; protein glycosylation. Its function is as follows. Specific component of the STT3A-containing form of the oligosaccharyl transferase (OST) complex that catalyzes the initial transfer of a defined glycan (Glc(3)Man(9)GlcNAc(2) in eukaryotes) from the lipid carrier dolichol-pyrophosphate to an asparagine residue within an Asn-X-Ser/Thr consensus motif in nascent polypeptide chains, the first step in protein N-glycosylation. N-glycosylation occurs cotranslationally and the complex associates with the Sec61 complex at the channel-forming translocon complex that mediates protein translocation across the endoplasmic reticulum (ER). All subunits are required for a maximal enzyme activity. In Danio rerio (Zebrafish), this protein is Oligosaccharyltransferase complex subunit ostc.